We begin with the raw amino-acid sequence, 452 residues long: Bone morphogenetic protein 5 (452 aa).

Residues 1 to 25 (MHWTVFLLRGIVGFLWSGWVQVGYA) form the signal peptide. Positions 26–314 (KGGLGDNHVH…ASEVLLRSVR (289 aa)) are excised as a propeptide. 4 N-linked (GlcNAc...) asparagine glycosylation sites follow: asparagine 209, asparagine 325, asparagine 343, and asparagine 393. The segment at 316 to 345 (ASKRKNQNRNKSNSHQDPSRMPSAGDYNTS) is disordered. Cystine bridges form between cysteine 351/cysteine 417, cysteine 380/cysteine 449, and cysteine 384/cysteine 451.

Belongs to the TGF-beta family. As to quaternary structure, interacts with ERFE; the interaction inhibits BMP-induced transcription of HAMP.

The protein resides in the secreted. In terms of biological role, growth factor of the TGF-beta superfamily that plays essential roles in many developmental processes, including cartilage and bone formation or neurogenesis. Initiates the canonical BMP signaling cascade by associating with type I receptor BMPR1A and type II receptor BMPR2. In turn, BMPR1A propagates signal by phosphorylating SMAD1/5/8 that travel to the nucleus and act as activators and repressors of transcription of target genes. Can also signal through non-canonical pathway such as MAPK p38 signaling cascade to promote chondrogenic differentiation. Promotes the expression of HAMP, this is repressed by its interaction with ERFE. This Mus musculus (Mouse) protein is Bone morphogenetic protein 5 (Bmp5).